Consider the following 26-residue polypeptide: SANPALAPRERKAGCKNFFWKTFTSC.

C15 and C26 are disulfide-bonded.

Belongs to the somatostatin family.

The protein localises to the secreted. Functionally, somatostatin inhibits the release of somatotropin. The sequence is that of Somatostatin-1 (sst1) from Amia calva (Bowfin).